The following is a 314-amino-acid chain: Olfactory receptor 2W3 (314 aa).

Residues 1 to 25 (MDGTNGSTQTHFILLGFSDRPHLER) lie on the Extracellular side of the membrane. N-linked (GlcNAc...) asparagine glycosylation occurs at N5. A helical transmembrane segment spans residues 26-49 (ILFVVILIAYLLTLVGNTTIILVS). Over 50-57 (RLDPHLHT) the chain is Cytoplasmic. The chain crosses the membrane as a helical span at residues 58–79 (PMYFFLAHLSFLDLSFTTSSIP). The Extracellular portion of the chain corresponds to 80-100 (QLLYNLNGCDKTISYMGCAIQ). A helical transmembrane segment spans residues 101 to 120 (LFLFLGLGGVECLLLAVMAY). The Cytoplasmic portion of the chain corresponds to 121-139 (DRCVAICKPLHYMVIMNPR). A helical transmembrane segment spans residues 140–158 (LCRGLVSVTWGCGVANSLA). Residues 159-195 (MSPVTLRLPRCGHHEVDHFLREMPALIRMACVSTVAI) lie on the Extracellular side of the membrane. Residues 196-219 (EGTVFVLAVGVVLSPLVFILLSYS) traverse the membrane as a helical segment. Residues 220 to 236 (YIVRAVLQIRSASGRQK) are Cytoplasmic-facing. The chain crosses the membrane as a helical span at residues 237–259 (AFGTCGSHLTVVSLFYGNIIYMY). Residues 260 to 272 (MQPGASSSQDQGM) lie on the Extracellular side of the membrane. The chain crosses the membrane as a helical span at residues 273-292 (FLMLFYNIVTPLLNPLIYTL). Topologically, residues 293–314 (RNREVKGALGRLLLGKRELGKE) are cytoplasmic.

This sequence belongs to the G-protein coupled receptor 1 family.

Its subcellular location is the cell membrane. Odorant receptor. In Homo sapiens (Human), this protein is Olfactory receptor 2W3 (OR2W3).